A 147-amino-acid polypeptide reads, in one-letter code: Small ribosomal subunit protein eS10B (147 aa).

Positions Thr90 to Ala147 are disordered. Positions Gly103–Gly127 are enriched in basic and acidic residues.

The protein belongs to the eukaryotic ribosomal protein eS10 family. Component of the small ribosomal subunit (SSU). Mature yeast ribosomes consist of a small (40S) and a large (60S) subunit. The 40S small subunit contains 1 molecule of ribosomal RNA (18S rRNA) and at least 33 different proteins. The large 60S subunit contains 3 rRNA molecules (25S, 5.8S and 5S rRNA) and at least 46 different proteins. eS10 interacts with GCN1 (via middle region); this interaction is direct and promotes GCN2 kinase activity.

The protein localises to the cytoplasm. Component of the ribosome, a large ribonucleoprotein complex responsible for the synthesis of proteins in the cell. The small ribosomal subunit (SSU) binds messenger RNAs (mRNAs) and translates the encoded message by selecting cognate aminoacyl-transfer RNA (tRNA) molecules. The large subunit (LSU) contains the ribosomal catalytic site termed the peptidyl transferase center (PTC), which catalyzes the formation of peptide bonds, thereby polymerizing the amino acids delivered by tRNAs into a polypeptide chain. The nascent polypeptides leave the ribosome through a tunnel in the LSU and interact with protein factors that function in enzymatic processing, targeting, and the membrane insertion of nascent chains at the exit of the ribosomal tunnel. eS10 plays a role as a positive regulator of the GCN2 kinase activity by stimulating GCN1-mediated GCN2 activation. The chain is Small ribosomal subunit protein eS10B (rps1002) from Schizosaccharomyces pombe (strain 972 / ATCC 24843) (Fission yeast).